Reading from the N-terminus, the 450-residue chain is 23S rRNA (uracil(1939)-C(5))-methyltransferase RlmD (450 aa).

A TRAM domain is found at 12–70 (SKQLSAKLSLSVNQLDHLGAGIAQHQGKVVFIPGALPDETVTVQLTEQKKNYARAKLIK). Residues Cys-83, Cys-89, Cys-92, and Cys-171 each coordinate [4Fe-4S] cluster. Residues Gln-283, Phe-312, Asn-317, Glu-333, Asp-360, and Asp-380 each contribute to the S-adenosyl-L-methionine site. The Nucleophile role is filled by Cys-406.

It belongs to the class I-like SAM-binding methyltransferase superfamily. RNA M5U methyltransferase family. RlmD subfamily.

It carries out the reaction uridine(1939) in 23S rRNA + S-adenosyl-L-methionine = 5-methyluridine(1939) in 23S rRNA + S-adenosyl-L-homocysteine + H(+). In terms of biological role, catalyzes the formation of 5-methyl-uridine at position 1939 (m5U1939) in 23S rRNA. The polypeptide is 23S rRNA (uracil(1939)-C(5))-methyltransferase RlmD (Shewanella baltica (strain OS195)).